A 220-amino-acid chain; its full sequence is Deoxyribose-phosphate aldolase (220 aa).

The Proton donor/acceptor role is filled by Asp89. The active-site Schiff-base intermediate with acetaldehyde is Lys151. Lys180 acts as the Proton donor/acceptor in catalysis.

The protein belongs to the DeoC/FbaB aldolase family. DeoC type 1 subfamily.

Its subcellular location is the cytoplasm. The enzyme catalyses 2-deoxy-D-ribose 5-phosphate = D-glyceraldehyde 3-phosphate + acetaldehyde. It functions in the pathway carbohydrate degradation; 2-deoxy-D-ribose 1-phosphate degradation; D-glyceraldehyde 3-phosphate and acetaldehyde from 2-deoxy-alpha-D-ribose 1-phosphate: step 2/2. Catalyzes a reversible aldol reaction between acetaldehyde and D-glyceraldehyde 3-phosphate to generate 2-deoxy-D-ribose 5-phosphate. The polypeptide is Deoxyribose-phosphate aldolase (Streptococcus gordonii (strain Challis / ATCC 35105 / BCRC 15272 / CH1 / DL1 / V288)).